The sequence spans 156 residues: uncharacterized protein (156 aa).

This sequence to L.lactis TrpF C-terminal region.

This is an uncharacterized protein from Bacillus subtilis (strain 168).